The sequence spans 438 residues: Protein translocase subunit SecY (438 aa).

10 consecutive transmembrane segments (helical) span residues 18-38, 76-96, 121-141, 154-174, 177-197, 212-232, 269-289, 315-335, 375-395, and 398-418; these read ILFT…PSPG, VGVM…VVIP, IALA…GGLL, IFSL…VMWM, LITE…GIAA, GVIF…VVFV, VIPV…TQLV, PVYI…YVSV, LPGS…LQIG, and GEVQ…GVGL.

This sequence belongs to the SecY/SEC61-alpha family. As to quaternary structure, component of the Sec protein translocase complex. Heterotrimer consisting of SecY, SecE and SecG subunits. The heterotrimers can form oligomers, although 1 heterotrimer is thought to be able to translocate proteins. Interacts with the ribosome. Interacts with SecDF, and other proteins may be involved. Interacts with SecA.

It localises to the cell membrane. Its function is as follows. The central subunit of the protein translocation channel SecYEG. Consists of two halves formed by TMs 1-5 and 6-10. These two domains form a lateral gate at the front which open onto the bilayer between TMs 2 and 7, and are clamped together by SecE at the back. The channel is closed by both a pore ring composed of hydrophobic SecY resides and a short helix (helix 2A) on the extracellular side of the membrane which forms a plug. The plug probably moves laterally to allow the channel to open. The ring and the pore may move independently. In Mycobacterium leprae (strain TN), this protein is Protein translocase subunit SecY.